We begin with the raw amino-acid sequence, 119 residues long: Holo-[acyl-carrier-protein] synthase (119 aa).

Positions 8 and 58 each coordinate Mg(2+).

Belongs to the P-Pant transferase superfamily. AcpS family. Mg(2+) serves as cofactor.

The protein localises to the cytoplasm. The enzyme catalyses apo-[ACP] + CoA = holo-[ACP] + adenosine 3',5'-bisphosphate + H(+). In terms of biological role, transfers the 4'-phosphopantetheine moiety from coenzyme A to a Ser of acyl-carrier-protein. The protein is Holo-[acyl-carrier-protein] synthase of Oceanobacillus iheyensis (strain DSM 14371 / CIP 107618 / JCM 11309 / KCTC 3954 / HTE831).